Consider the following 87-residue polypeptide: UPF0473 protein Dred_0776 (87 aa).

Belongs to the UPF0473 family.

In Desulforamulus reducens (strain ATCC BAA-1160 / DSM 100696 / MI-1) (Desulfotomaculum reducens), this protein is UPF0473 protein Dred_0776.